A 317-amino-acid polypeptide reads, in one-letter code: Methionyl-tRNA formyltransferase (317 aa).

110–113 (SLLP) contributes to the (6S)-5,6,7,8-tetrahydrofolate binding site.

It belongs to the Fmt family.

The enzyme catalyses L-methionyl-tRNA(fMet) + (6R)-10-formyltetrahydrofolate = N-formyl-L-methionyl-tRNA(fMet) + (6S)-5,6,7,8-tetrahydrofolate + H(+). Its function is as follows. Attaches a formyl group to the free amino group of methionyl-tRNA(fMet). The formyl group appears to play a dual role in the initiator identity of N-formylmethionyl-tRNA by promoting its recognition by IF2 and preventing the misappropriation of this tRNA by the elongation apparatus. This is Methionyl-tRNA formyltransferase from Lactiplantibacillus plantarum (strain ATCC BAA-793 / NCIMB 8826 / WCFS1) (Lactobacillus plantarum).